The chain runs to 405 residues: Caspase-1 (405 aa).

Residues 1 to 91 (MADKVLKEKR…HLAETLRLSS (91 aa)) enclose the CARD domain. Residues 1 to 119 (MADKVLKEKR…SSPALQAMPD (119 aa)) constitute a propeptide that is removed on maturation. Catalysis depends on residues H238 and C286. A propeptide spanning residues 299–317 (STGTSGNSSSLAPDDFEDD) is cleaved from the precursor. S303 carries the post-translational modification Phosphoserine.

This sequence belongs to the peptidase C14A family. In terms of assembly, heterotetramer that consists of two anti-parallel arranged heterodimers, each one formed by a 20 kDa (Caspase-1 subunit p20) and a 10 kDa (Caspase-1 subunit p10) subunit. May be a component of the inflammasome, a protein complex which also includes PYCARD, CARD8 and NLRP2 and whose function would be the activation of pro-inflammatory caspases. Component of the AIM2 PANoptosome complex, a multiprotein complex that drives inflammatory cell death (PANoptosis). Both the p10 and p20 subunits interact with MEFV. Interacts with CARD17P/INCA and CARD18. Interacts with SERPINB1; this interaction regulates CASP1 activity. As to quaternary structure, heterotetramer that consists of two anti-parallel arranged heterodimers, each one formed by a 20 kDa (Caspase-1 subunit p20) and a 10 kDa (Caspase-1 subunit p10) subunit. Post-translationally, the two subunits are derived from the precursor sequence by an autocatalytic mechanism. In terms of processing, ubiquitinated via 'Lys-11'-linked polyubiquitination. Deubiquitinated by USP8.

Its subcellular location is the cytoplasm. It is found in the cell membrane. It carries out the reaction Strict requirement for an Asp residue at position P1 and has a preferred cleavage sequence of Tyr-Val-Ala-Asp-|-.. In terms of biological role, thiol protease involved in a variety of inflammatory processes by proteolytically cleaving other proteins, such as the precursors of the inflammatory cytokines interleukin-1 beta (IL1B) and interleukin 18 (IL18) as well as the pyroptosis inducer Gasdermin-D (GSDMD), into active mature peptides. Plays a key role in cell immunity as an inflammatory response initiator: once activated through formation of an inflammasome complex, it initiates a pro-inflammatory response through the cleavage of the two inflammatory cytokines IL1B and IL18, releasing the mature cytokines which are involved in a variety of inflammatory processes. Cleaves a tetrapeptide after an Asp residue at position P1. Also initiates pyroptosis, a programmed lytic cell death pathway, through cleavage of GSDMD. In contrast to cleavage of interleukin IL1B, recognition and cleavage of GSDMD is not strictly dependent on the consensus cleavage site but depends on an exosite interface on CASP1 that recognizes and binds the Gasdermin-D, C-terminal (GSDMD-CT) part. Cleaves and activates CASP7 in response to bacterial infection, promoting plasma membrane repair. Upon inflammasome activation, during DNA virus infection but not RNA virus challenge, controls antiviral immunity through the cleavage of CGAS, rendering it inactive. In apoptotic cells, cleaves SPHK2 which is released from cells and remains enzymatically active extracellularly. This Equus caballus (Horse) protein is Caspase-1 (CASP1).